The sequence spans 359 residues: CMP-N-acetylneuraminate-poly-alpha-2,8-sialyltransferase (359 aa).

Residues 1–7 (MRSIRKR) are Cytoplasmic-facing. A helical; Signal-anchor for type II membrane protein membrane pass occupies residues 8–20 (WTICTISLLLIFY). At 21–359 (KTKEIARTEE…KLTTGKCVKQ (339 aa)) the chain is on the lumenal side. N-linked (GlcNAc...) asparagine glycans are attached at residues N50, N74, and N119. Cystine bridges form between C142–C292 and C156–C356. 2 residues coordinate CMP-N-acetyl-beta-neuraminate: N147 and N170. 2 N-linked (GlcNAc...) asparagine glycosylation sites follow: N204 and N219. Positions 279, 280, 281, and 301 each coordinate CMP-N-acetyl-beta-neuraminate. The Proton donor/acceptor role is filled by H331.

The protein belongs to the glycosyltransferase 29 family. Post-translationally, autopolysialylated.

The protein localises to the golgi apparatus membrane. It localises to the secreted. It carries out the reaction [N-acetyl-alpha-D-neuraminosyl-(2-&gt;8)](n) + CMP-N-acetyl-beta-neuraminate = [N-acetyl-alpha-D-neuraminosyl-(2-&gt;8)](n+1) + CMP + H(+). In terms of biological role, catalyzes the transfer of a sialic acid from a CMP-linked sialic acid donor onto a terminal alpha-2,3-, alpha-2,6-, or alpha-2,8-linked sialic acid of an N-linked glycan protein acceptor through alpha-2,8-linkages. Therefore, participates in polysialic acid synthesis on various sialylated N-acetyllactosaminyl oligosaccharides, including NCAM1 N-glycans, FETUB N-glycans and AHSG. It is noteworthy that alpha-2,3-linked sialic acid is apparently a better acceptor than alpha-2,6-linked sialic acid. This chain is CMP-N-acetylneuraminate-poly-alpha-2,8-sialyltransferase (ST8SIA4), found in Pan troglodytes (Chimpanzee).